Consider the following 256-residue polypeptide: 6-phosphogluconolactonase (256 aa).

It belongs to the glucosamine/galactosamine-6-phosphate isomerase family. 6-phosphogluconolactonase subfamily.

It carries out the reaction 6-phospho-D-glucono-1,5-lactone + H2O = 6-phospho-D-gluconate + H(+). Its pathway is carbohydrate degradation; pentose phosphate pathway; D-ribulose 5-phosphate from D-glucose 6-phosphate (oxidative stage): step 2/3. Its function is as follows. Hydrolysis of 6-phosphogluconolactone to 6-phosphogluconate. The protein is 6-phosphogluconolactonase (pgl) of Chlamydia muridarum (strain MoPn / Nigg).